The sequence spans 353 residues: Holliday junction branch migration complex subunit RuvB (353 aa).

The tract at residues 4-185 is large ATPase domain (RuvB-L); it reads ADRLITAVGG…FGIVQRLEFY (182 aa). Residues Ile-24, Arg-25, Gly-66, Lys-69, Thr-70, Thr-71, 132 to 134, Arg-175, Tyr-185, and Arg-222 each bind ATP; that span reads EDF. Thr-70 lines the Mg(2+) pocket. The small ATPAse domain (RuvB-S) stretch occupies residues 186-256; that stretch reads NIADLSTIVA…TADKALNLLD (71 aa). The segment at 259 to 353 is head domain (RuvB-H); sequence EHGFDHQDRR…GEFVDDAADL (95 aa). Residues Arg-295, Arg-314, and Arg-319 each contribute to the DNA site.

It belongs to the RuvB family. As to quaternary structure, homohexamer. Forms an RuvA(8)-RuvB(12)-Holliday junction (HJ) complex. HJ DNA is sandwiched between 2 RuvA tetramers; dsDNA enters through RuvA and exits via RuvB. An RuvB hexamer assembles on each DNA strand where it exits the tetramer. Each RuvB hexamer is contacted by two RuvA subunits (via domain III) on 2 adjacent RuvB subunits; this complex drives branch migration. In the full resolvosome a probable DNA-RuvA(4)-RuvB(12)-RuvC(2) complex forms which resolves the HJ.

The protein localises to the cytoplasm. The catalysed reaction is ATP + H2O = ADP + phosphate + H(+). Functionally, the RuvA-RuvB-RuvC complex processes Holliday junction (HJ) DNA during genetic recombination and DNA repair, while the RuvA-RuvB complex plays an important role in the rescue of blocked DNA replication forks via replication fork reversal (RFR). RuvA specifically binds to HJ cruciform DNA, conferring on it an open structure. The RuvB hexamer acts as an ATP-dependent pump, pulling dsDNA into and through the RuvAB complex. RuvB forms 2 homohexamers on either side of HJ DNA bound by 1 or 2 RuvA tetramers; 4 subunits per hexamer contact DNA at a time. Coordinated motions by a converter formed by DNA-disengaged RuvB subunits stimulates ATP hydrolysis and nucleotide exchange. Immobilization of the converter enables RuvB to convert the ATP-contained energy into a lever motion, pulling 2 nucleotides of DNA out of the RuvA tetramer per ATP hydrolyzed, thus driving DNA branch migration. The RuvB motors rotate together with the DNA substrate, which together with the progressing nucleotide cycle form the mechanistic basis for DNA recombination by continuous HJ branch migration. Branch migration allows RuvC to scan DNA until it finds its consensus sequence, where it cleaves and resolves cruciform DNA. The protein is Holliday junction branch migration complex subunit RuvB of Pseudomonas syringae pv. tomato (strain ATCC BAA-871 / DC3000).